Consider the following 469-residue polypeptide: Tubulin gamma-1 chain (469 aa).

142–148 (AGGTGSG) provides a ligand contact to GTP.

This sequence belongs to the tubulin family.

Its subcellular location is the cytoplasm. The protein localises to the cytoskeleton. It is found in the microtubule organizing center. In terms of biological role, tubulin is the major constituent of microtubules. The gamma chain is found at microtubule organizing centers (MTOC) such as the spindle poles, suggesting that it is involved in the minus-end nucleation of microtubule assembly. This Zea mays (Maize) protein is Tubulin gamma-1 chain (TUBG1).